We begin with the raw amino-acid sequence, 135 residues long: uncharacterized protein (135 aa).

The region spanning 4-129 (SIVHIALVVN…YGNLWDLLQL (126 aa)) is the VOC domain.

It to B.subtilis YwkD.

This is an uncharacterized protein from Shewanella frigidimarina (strain NCIMB 400).